The following is an 818-amino-acid chain: Glycogen phosphorylase (818 aa).

At K667 the chain carries N6-(pyridoxal phosphate)lysine.

Belongs to the glycogen phosphorylase family. Pyridoxal 5'-phosphate serves as cofactor.

The enzyme catalyses [(1-&gt;4)-alpha-D-glucosyl](n) + phosphate = [(1-&gt;4)-alpha-D-glucosyl](n-1) + alpha-D-glucose 1-phosphate. Phosphorylase is an important allosteric enzyme in carbohydrate metabolism. Enzymes from different sources differ in their regulatory mechanisms and in their natural substrates. However, all known phosphorylases share catalytic and structural properties. This is Glycogen phosphorylase (glgP) from Pasteurella multocida (strain Pm70).